The sequence spans 476 residues: Angiotensinogen (476 aa).

An N-terminal signal peptide occupies residues 1 to 24; it reads MAPAGVSLRATILCLLAWAGLAAG. At Asp25 the chain carries Beta-decarboxylated aspartate; in form angiotensin-A. Asn38, Asn161, Asn295, and Asn319 each carry an N-linked (GlcNAc...) asparagine glycan. A disulfide bridge connects residues Cys42 and Cys162.

This sequence belongs to the serpin family. As to quaternary structure, during pregnancy, exists as a disulfide-linked 2:2 heterotetramer with the proform of PRG2 and as a complex (probably a 2:2:2 heterohexamer) with pro-PRG2 and C3dg. Beta-decarboxylation of Asp-25 in angiotensin-2, by mononuclear leukocytes produces alanine. The resulting peptide form, angiotensin-A, has the same affinity for the AT1 receptor as angiotensin-2, but a higher affinity for the AT2 receptor. Post-translationally, in response to low blood pressure, the enzyme renin/REN cleaves angiotensinogen to produce angiotensin-1. Angiotensin-1 is a substrate of ACE (angiotensin converting enzyme) that removes a dipeptide to yield the physiologically active peptide angiotensin-2. Angiotensin-1 and angiotensin-2 can be further processed to generate angiotensin-3, angiotensin-4. Angiotensin 1-9 is cleaved from angiotensin-1 by ACE2 and can be further processed by ACE to produce angiotensin 1-7, angiotensin 1-5 and angiotensin 1-4. Angiotensin 1-7 has also been proposed to be cleaved from angiotensin-2 by ACE2 or from angiotensin-1 by MME (neprilysin). In terms of processing, the disulfide bond is labile. Angiotensinogen is present in the circulation in a near 40:60 ratio with the oxidized disulfide-bonded form, which preferentially interacts with receptor-bound renin. In terms of tissue distribution, expressed by the liver and secreted in plasma.

It localises to the secreted. In terms of biological role, essential component of the renin-angiotensin system (RAS), a potent regulator of blood pressure, body fluid and electrolyte homeostasis. Its function is as follows. Acts directly on vascular smooth muscle as a potent vasoconstrictor, affects cardiac contractility and heart rate through its action on the sympathetic nervous system, and alters renal sodium and water absorption through its ability to stimulate the zona glomerulosa cells of the adrenal cortex to synthesize and secrete aldosterone. Acts by binding to angiotensin receptors AGTR1 and AGTR2. Also binds the DEAR/FBXW7-AS1 receptor. Functionally, stimulates aldosterone release. Is a ligand for the G-protein coupled receptor MAS1. Has vasodilator and antidiuretic effects. Has an antithrombotic effect that involves MAS1-mediated release of nitric oxide from platelets. The chain is Angiotensinogen from Homo sapiens (Human).